The sequence spans 602 residues: 3-hydroxy-3-methylglutaryl-coenzyme A reductase 2 (602 aa).

Helical transmembrane passes span 44–67 (ASDALPLPLYLTTNGLFFTMFFSV) and 95–115 (AIVSLIASVIYLLGFFGIGFV). Residues 116 to 187 (QTFVSRGNND…PLITSASSGE (72 aa)) form a linker region. Asparagine 124 carries N-linked (GlcNAc...) asparagine glycosylation. The tract at residues 188–602 (DEEIIKSVVQ…STKDVTKASS (415 aa)) is catalytic. Glutamate 281 functions as the Charge relay system in the catalytic mechanism. The N-linked (GlcNAc...) asparagine glycan is linked to asparagine 345. The Charge relay system role is filled by lysine 413. N-linked (GlcNAc...) asparagine glycosylation occurs at asparagine 458. Aspartate 489 functions as the Charge relay system in the catalytic mechanism. Histidine 587 acts as the Proton donor in catalysis. An N-linked (GlcNAc...) asparagine glycan is attached at asparagine 591.

Belongs to the HMG-CoA reductase family.

The protein localises to the endoplasmic reticulum membrane. It carries out the reaction (R)-mevalonate + 2 NADP(+) + CoA = (3S)-3-hydroxy-3-methylglutaryl-CoA + 2 NADPH + 2 H(+). It functions in the pathway metabolic intermediate biosynthesis; (R)-mevalonate biosynthesis; (R)-mevalonate from acetyl-CoA: step 3/3. Functionally, catalyzes the synthesis of mevalonate. The specific precursor of all isoprenoid compounds present in plants. The protein is 3-hydroxy-3-methylglutaryl-coenzyme A reductase 2 (HMG2) of Solanum lycopersicum (Tomato).